The chain runs to 262 residues: Spindlin-1 (262 aa).

The segment at Met-1–Pro-49 is disordered. Residues Lys-7 and Lys-28 each participate in a glycyl lysine isopeptide (Lys-Gly) (interchain with G-Cter in SUMO2) cross-link. Residues Met-27 to Thr-38 are compositionally biased toward basic residues. Lys-44 bears the N6-acetyllysine; alternate mark. Lys-44 participates in a covalent cross-link: Glycyl lysine isopeptide (Lys-Gly) (interchain with G-Cter in SUMO2); alternate. Positions Ile-53–Asp-116 are tudor-like domain 1. The tract at residues Gly-93–Tyr-98 is histone H3K4me3 and H3R8me2a binding. Residues Ser-109 and Ser-124 each carry the phosphoserine; by AURKA modification. Residues Met-132–Met-193 form a tudor-like domain 2 region. Position 142 (Glu-142) is a region of interest, histone H3K4me3 and H3R8me2a binding. Ser-199 is subject to Phosphoserine. The segment at Leu-213–Ser-262 is tudor-like domain 3. A histone H3K4me3 and H3R8me2a binding region spans residues Asp-250–His-252.

It belongs to the SPIN/STSY family. In terms of assembly, homodimer; may form higher-order oligomers. Interacts with TCF7L2/TCF4; the interaction is direct. Interacts with HABP4 and SERBP1. Interacts with SPINDOC; SPINDOC stabilizes SPIN1 and enhances its association with bivalent H3K4me3K9me3 mark. Interacts with SPOCD1; promoting recruitment of PIWIL4 and SPOCD1 to transposons. In terms of processing, phosphorylated during oocyte meiotic maturation.

It is found in the nucleus. The protein localises to the nucleolus. Its function is as follows. Chromatin reader that specifically recognizes and binds histone H3 both trimethylated at 'Lys-4' and 'Lys-9' (H3K4me3K9me3) and is involved in piRNA-mediated retrotransposon silencing during spermatogenesis. Plays a key role in the initiation of the PIWIL4-piRNA pathway, a pathway that directs transposon DNA methylation and silencing in the male embryonic germ cells, by promoting recruitment of DNA methylation machinery to transposons: binds young, but not old, LINE1 transposons, which are specifically marked with H3K4me3K9me3, and promotes the recruitment of PIWIL4 and SPOCD1 to transposons, leading to piRNA-directed DNA methylation. Also recognizes and binds histone H3 both trimethylated at 'Lys-4' and asymmetrically dimethylated at 'Arg-8' (H3K4me3 and H3R8me2a) and acts as an activator of Wnt signaling pathway downstream of PRMT2. Overexpression induces metaphase arrest and chromosomal instability. Overexpression induces metaphase arrest and chromosomal instability. Localizes to active rDNA loci and promotes the expression of rRNA genes. May play a role in cell-cycle regulation during the transition from gamete to embryo. Involved in oocyte meiotic resumption, a process that takes place before ovulation to resume meiosis of oocytes blocked in prophase I: may act by regulating maternal transcripts to control meiotic resumption. This chain is Spindlin-1 (Spin1), found in Rattus norvegicus (Rat).